Consider the following 258-residue polypeptide: Tryptophan synthase alpha chain (258 aa).

Catalysis depends on proton acceptor residues E52 and D63.

The protein belongs to the TrpA family. In terms of assembly, tetramer of two alpha and two beta chains.

The enzyme catalyses (1S,2R)-1-C-(indol-3-yl)glycerol 3-phosphate + L-serine = D-glyceraldehyde 3-phosphate + L-tryptophan + H2O. It participates in amino-acid biosynthesis; L-tryptophan biosynthesis; L-tryptophan from chorismate: step 5/5. The alpha subunit is responsible for the aldol cleavage of indoleglycerol phosphate to indole and glyceraldehyde 3-phosphate. The sequence is that of Tryptophan synthase alpha chain from Streptococcus pneumoniae (strain ATCC 700669 / Spain 23F-1).